The sequence spans 337 residues: F420-dependent glucose-6-phosphate dehydrogenase (337 aa).

D44 lines the coenzyme F420-(gamma-Glu)n pocket. The active-site Proton donor is the H45. Coenzyme F420-(gamma-Glu)n-binding positions include T81 and 112–113 (TG). The active-site Proton acceptor is the E114. Residues N117, 180-181 (GG), and 183-184 (GV) contribute to the coenzyme F420-(gamma-Glu)n site. Residues T198, K201, K262, and R286 each contribute to the substrate site.

It belongs to the F420-dependent glucose-6-phosphate dehydrogenase family. In terms of assembly, homodimer.

The catalysed reaction is oxidized coenzyme F420-(gamma-L-Glu)(n) + D-glucose 6-phosphate + H(+) = 6-phospho-D-glucono-1,5-lactone + reduced coenzyme F420-(gamma-L-Glu)(n). Catalyzes the coenzyme F420-dependent oxidation of glucose 6-phosphate (G6P) to 6-phosphogluconolactone. The chain is F420-dependent glucose-6-phosphate dehydrogenase from Kineococcus radiotolerans (strain ATCC BAA-149 / DSM 14245 / SRS30216).